A 207-amino-acid chain; its full sequence is dTTP/UTP pyrophosphatase (207 aa).

The active-site Proton acceptor is D80.

The protein belongs to the Maf family. YhdE subfamily. It depends on a divalent metal cation as a cofactor.

The protein resides in the cytoplasm. It catalyses the reaction dTTP + H2O = dTMP + diphosphate + H(+). The enzyme catalyses UTP + H2O = UMP + diphosphate + H(+). In terms of biological role, nucleoside triphosphate pyrophosphatase that hydrolyzes dTTP and UTP. May have a dual role in cell division arrest and in preventing the incorporation of modified nucleotides into cellular nucleic acids. The chain is dTTP/UTP pyrophosphatase (maf1) from Agrobacterium fabrum (strain C58 / ATCC 33970) (Agrobacterium tumefaciens (strain C58)).